The primary structure comprises 423 residues: UDP-N-acetylglucosamine 1-carboxyvinyltransferase (423 aa).

Residue 22–23 participates in phosphoenolpyruvate binding; that stretch reads KN. Arginine 98 contacts UDP-N-acetyl-alpha-D-glucosamine. Cysteine 122 serves as the catalytic Proton donor. Residue cysteine 122 is modified to 2-(S-cysteinyl)pyruvic acid O-phosphothioketal. UDP-N-acetyl-alpha-D-glucosamine is bound by residues 127 to 131, aspartate 311, and isoleucine 333; that span reads RPVDQ.

The protein belongs to the EPSP synthase family. MurA subfamily.

It localises to the cytoplasm. The enzyme catalyses phosphoenolpyruvate + UDP-N-acetyl-alpha-D-glucosamine = UDP-N-acetyl-3-O-(1-carboxyvinyl)-alpha-D-glucosamine + phosphate. Its pathway is cell wall biogenesis; peptidoglycan biosynthesis. Functionally, cell wall formation. Adds enolpyruvyl to UDP-N-acetylglucosamine. In Stenotrophomonas maltophilia (strain K279a), this protein is UDP-N-acetylglucosamine 1-carboxyvinyltransferase.